The primary structure comprises 122 residues: MALNIENIIAEIKEASILELNDLVKAIEEEFGVTAAAPVAVAAADAADAGAAKDSFDVELTSAGDKKVGVIKVVREITGLGLKEAKELVDGAPALVKEGVATAEAEEIKAKLEEAGASVTLK.

It belongs to the bacterial ribosomal protein bL12 family. As to quaternary structure, homodimer. Part of the ribosomal stalk of the 50S ribosomal subunit. Forms a multimeric L10(L12)X complex, where L10 forms an elongated spine to which 2 to 4 L12 dimers bind in a sequential fashion. Binds GTP-bound translation factors.

Forms part of the ribosomal stalk which helps the ribosome interact with GTP-bound translation factors. Is thus essential for accurate translation. The polypeptide is Large ribosomal subunit protein bL12 (Streptococcus pneumoniae serotype 19F (strain G54)).